Reading from the N-terminus, the 510-residue chain is Nectin-4 (510 aa).

The signal sequence occupies residues 1-31; it reads MPLSLGAEMWGPEAWLLLLLLLASFTGRCPA. An Ig-like V-type domain is found at 32 to 144; the sequence is GELETSDVVT…GSFQARLRLR (113 aa). Residues 32–349 lie on the Extracellular side of the membrane; sequence GELETSDVVT…GKQVDLVSAS (318 aa). 3 disulfides stabilise this stretch: Cys-52–Cys-127, Cys-171–Cys-223, and Cys-270–Cys-315. 2 consecutive Ig-like C2-type domains span residues 148 to 237 and 248 to 331; these read PPLP…QRIT and ASVR…VTVD. An N-linked (GlcNAc...) asparagine glycan is attached at Asn-281. The helical transmembrane segment at 350–370 threads the bilayer; it reads VVVVGVIAALLFCLLVVVVVL. Topologically, residues 371–510 are cytoplasmic; that stretch reads MSRYHRRKAQ…IYINGRGHLV (140 aa). Over residues 399–412 the composition is skewed to basic and acidic residues; the sequence is RRLHSHHTDPRSQP. 2 disordered regions span residues 399–447 and 457–476; these read RRLH…SYST and QTELLSPGSGRAEEEEDQDE.

The protein belongs to the nectin family. In terms of assembly, self-associates. Interacts via its Ig-like V-type domain with NECTIN1 Ig-like V-type domain. Interacts via its C-terminus with AFDN. As to quaternary structure, (Microbial infection) Interacts (via N-terminus) with measles virus hemagglutinin protein. Post-translationally, the soluble form is produced by proteolytic cleavage at the cell surface (shedding), probably by ADAM17/TACE. Predominantly expressed in placenta. Not detected in normal breast epithelium but expressed in breast carcinoma.

The protein resides in the cell membrane. The protein localises to the cell junction. It is found in the adherens junction. Its subcellular location is the secreted. Its function is as follows. Seems to be involved in cell adhesion through trans-homophilic and -heterophilic interactions, the latter including specifically interactions with NECTIN1. Does not act as receptor for alpha-herpesvirus entry into cells. In terms of biological role, (Microbial infection) Acts as a receptor for measles virus. This is Nectin-4 from Homo sapiens (Human).